The sequence spans 327 residues: GTPase Obg (327 aa).

Positions 1 to 159 (MKFVDSARIV…LKVDLELKLM (159 aa)) constitute an Obg domain. Positions 120 to 145 (GGDGGRGNPHFTTSTRQAPRYAEPGG) are disordered. The 164-residue stretch at 160 to 323 (ADVGLVGFPN…LRNALWNTIN (164 aa)) folds into the OBG-type G domain. GTP-binding positions include 166–173 (GFPNAGKS), 191–195 (FTTLV), 213–216 (DIPG), 280–283 (TKMD), and 304–306 (SSI). Mg(2+) contacts are provided by serine 173 and threonine 193.

It belongs to the TRAFAC class OBG-HflX-like GTPase superfamily. OBG GTPase family. In terms of assembly, monomer. Mg(2+) is required as a cofactor.

The protein resides in the cytoplasm. In terms of biological role, an essential GTPase which binds GTP, GDP and possibly (p)ppGpp with moderate affinity, with high nucleotide exchange rates and a fairly low GTP hydrolysis rate. Plays a role in control of the cell cycle, stress response, ribosome biogenesis and in those bacteria that undergo differentiation, in morphogenesis control. The polypeptide is GTPase Obg (Prosthecochloris aestuarii (strain DSM 271 / SK 413)).